Here is a 334-residue protein sequence, read N- to C-terminus: Beta-hexosaminidase (334 aa).

Residues D60, R68, R133, and 163-164 contribute to the substrate site; that span reads KH. The active-site Proton donor/acceptor is H176. The Nucleophile role is filled by D247.

The protein belongs to the glycosyl hydrolase 3 family. NagZ subfamily.

Its subcellular location is the cytoplasm. The enzyme catalyses Hydrolysis of terminal non-reducing N-acetyl-D-hexosamine residues in N-acetyl-beta-D-hexosaminides.. Its pathway is cell wall biogenesis; peptidoglycan recycling. Plays a role in peptidoglycan recycling by cleaving the terminal beta-1,4-linked N-acetylglucosamine (GlcNAc) from peptide-linked peptidoglycan fragments, giving rise to free GlcNAc, anhydro-N-acetylmuramic acid and anhydro-N-acetylmuramic acid-linked peptides. In Xanthomonas euvesicatoria pv. vesicatoria (strain 85-10) (Xanthomonas campestris pv. vesicatoria), this protein is Beta-hexosaminidase.